The primary structure comprises 859 residues: Photoactivated adenylate cyclase subunit beta-like protein ST- (859 aa).

In terms of domain architecture, BLUF 1 spans 56-149 (LRRLMYLSKS…GRMYGDWHMK (94 aa)). Residues 420–444 (RPPIFDDTPKSNPRPRTPGYGGRQR) are disordered. The region spanning 471 to 563 (LTTLTYISQA…RVYTSEWTLT (93 aa)) is the BLUF 2 domain. The disordered stretch occupies residues 814–859 (ARSGEQPLTEPEQAKPDFRVSPGRDRHGVSGRRSNSSQGKGSIQVG). The segment covering 825–841 (EQAKPDFRVSPGRDRHG) has biased composition (basic and acidic residues). The segment covering 845–859 (RRSNSSQGKGSIQVG) has biased composition (polar residues).

Heterotetramer of two alpha and two beta subunits.

The protein resides in the cell projection. The protein localises to the cilium. Its subcellular location is the flagellum. This chain is Photoactivated adenylate cyclase subunit beta-like protein ST-, found in Euglena gracilis.